Reading from the N-terminus, the 236-residue chain is Increased recombination centers protein 22-2 (236 aa).

The first 19 residues, 1 to 19 (MKFSAILTALTATIATVAG), serve as a signal peptide directing secretion. The Lumenal segment spans residues 20–161 (YETSGKPHTV…AAVSFFDPRL (142 aa)). Residues 162–182 (IFLELVLLATFGGIAYFVYEI) traverse the membrane as a helical segment. The Cytoplasmic segment spans residues 183–236 (WGKQYLRGTAPVKVPVKKSGSPVAVKEASPVGSASGFDESWIPEAHLKKNKKKA).

Belongs to the IRC22 family.

The protein resides in the endoplasmic reticulum membrane. Is probably involved in a pathway contributing to genomic integrity. In Candida tropicalis (strain ATCC MYA-3404 / T1) (Yeast), this protein is Increased recombination centers protein 22-2 (IRC22-2).